A 385-amino-acid polypeptide reads, in one-letter code: Odorant receptor 47a (385 aa).

The Cytoplasmic segment spans residues 1 to 33 (MDSFLQVQKSTIALLGFDLFSENREMWKRPYRA). A helical transmembrane segment spans residues 34 to 54 (MNVFSIAAIFPFILAAVLHNW). Topologically, residues 55-62 (KNVLLLAD) are extracellular. Residues 63-83 (AMVALLITILGLFKFSMILYL) form a helical membrane-spanning segment. The Cytoplasmic segment spans residues 84–129 (RRDFKRLIDKFRLLMSNEAEQGEEYAEILNAANKQDQRMCTLFRTC). The helical transmembrane segment at 130–150 (FLLAWALNSVLPLVRMGLSYW) threads the bilayer. Residues 151-175 (LAGHAEPELPFPCLFPWNIHIIRNY) lie on the Extracellular side of the membrane. A helical membrane pass occupies residues 176–196 (VLSFIWSAFASTGVVLPAVSL). Over 197–255 (DTIFCSFTSNLCAFFKIAQYKVVRFKGGSLKESQATLNKVFALYQTSLDMCNDLNQCYQ) the chain is Cytoplasmic. A helical transmembrane segment spans residues 256-276 (PIICAQFFISSLQLCMLGYLF). Over 277-284 (SITFAQTE) the chain is Extracellular. Residues 285–305 (GVYYASFIATIIIQAYIYCYC) traverse the membrane as a helical segment. The Cytoplasmic portion of the chain corresponds to 306–357 (GENLKTESASFEWAIYDSPWHESLGAGGASTSICRSLLISMMRAHRGFRITG). The chain crosses the membrane as a helical span at residues 358–378 (YFFEANMEAFSSIVRTAMSYI). The Extracellular portion of the chain corresponds to 379–385 (TMLRSFS).

Belongs to the insect chemoreceptor superfamily. Heteromeric odorant receptor channel (TC 1.A.69) family. Or1a subfamily. Interacts with Orco. Complexes exist early in the endomembrane system in olfactory sensory neurons (OSNs), coupling these complexes to the conserved ciliary trafficking pathway. As to expression, expressed with Orco in 40 olfactory receptor neurons in a broad area across the antenna, including both anterior and posterior faces. This expression pattern matches the distribution of the small sensilla basiconica. Expression in the antenna is observed late in antennal development at 93 hours APF.

It localises to the cell membrane. In terms of biological role, odorant receptor which mediates acceptance or avoidance behavior, depending on its substrates. The odorant receptor repertoire encodes a large collection of odor stimuli that vary widely in identity, intensity, and duration. Complexes with Orco to form odorant-sensing units, providing sensitive and prolonged odorant signaling and calcium permeability. They are necessary and sufficient to promote functional reconstitution of odor-evoked signaling in sensory neurons that normally respond only to carbon dioxide. Involved in the behavioral responses to esters. Involved in the behavioral responses to pentyl acetate. This chain is Odorant receptor 47a (Or47a), found in Drosophila melanogaster (Fruit fly).